Consider the following 173-residue polypeptide: Shikimate kinase 2 (173 aa).

12-17 provides a ligand contact to ATP; it reads GCGKTT. The Mg(2+) site is built by Thr-16 and Asp-32. Substrate-binding residues include Asp-34, Arg-58, and Gly-79. Positions 112-126 are LID domain; that stretch reads EENPQDNQRPTLTGR. Arg-120 contributes to the ATP binding site. Residue Arg-139 coordinates substrate. Gln-155 contributes to the ATP binding site.

The protein belongs to the shikimate kinase family. AroL subfamily. As to quaternary structure, monomer. It depends on Mg(2+) as a cofactor.

It localises to the cytoplasm. It catalyses the reaction shikimate + ATP = 3-phosphoshikimate + ADP + H(+). Its pathway is metabolic intermediate biosynthesis; chorismate biosynthesis; chorismate from D-erythrose 4-phosphate and phosphoenolpyruvate: step 5/7. Functionally, catalyzes the specific phosphorylation of the 3-hydroxyl group of shikimic acid using ATP as a cosubstrate. This is Shikimate kinase 2 from Pectobacterium atrosepticum (strain SCRI 1043 / ATCC BAA-672) (Erwinia carotovora subsp. atroseptica).